Here is a 148-residue protein sequence, read N- to C-terminus: Large ribosomal subunit protein uL15 (148 aa).

Residues 1–30 show a composition bias toward basic residues; sequence MPSRLRKTRKLRGHVSHGHGRIGKHRKHPG. The disordered stretch occupies residues 1–37; that stretch reads MPSRLRKTRKLRGHVSHGHGRIGKHRKHPGGRGNAGG. H39 bears the (3S)-3-hydroxyhistidine mark. Residues K47 and K55 each carry the N6-acetyllysine modification. S68 carries the phosphoserine modification. K110 carries the N6-acetyllysine modification.

Belongs to the universal ribosomal protein uL15 family. Component of the large ribosomal subunit. In terms of processing, hydroxylated on His-39 by MINA.

The protein localises to the cytoplasm. Its function is as follows. Component of the large ribosomal subunit. The ribosome is a large ribonucleoprotein complex responsible for the synthesis of proteins in the cell. The sequence is that of Large ribosomal subunit protein uL15 (RPL27A) from Bos taurus (Bovine).